The primary structure comprises 224 residues: ATP-dependent dethiobiotin synthetase BioD (224 aa).

Residue 14-19 (GIGKTV) coordinates ATP. Thr18 is a Mg(2+) binding site. Lys39 is a catalytic residue. Ser43 is a binding site for substrate. ATP is bound by residues Asp56, 117 to 120 (EGVG), and 177 to 178 (NE). Residues Asp56 and Glu117 each contribute to the Mg(2+) site.

Belongs to the dethiobiotin synthetase family. As to quaternary structure, homodimer. Mg(2+) is required as a cofactor.

It localises to the cytoplasm. It carries out the reaction (7R,8S)-7,8-diammoniononanoate + CO2 + ATP = (4R,5S)-dethiobiotin + ADP + phosphate + 3 H(+). The protein operates within cofactor biosynthesis; biotin biosynthesis; biotin from 7,8-diaminononanoate: step 1/2. Catalyzes a mechanistically unusual reaction, the ATP-dependent insertion of CO2 between the N7 and N8 nitrogen atoms of 7,8-diaminopelargonic acid (DAPA, also called 7,8-diammoniononanoate) to form a ureido ring. In Xanthomonas campestris pv. campestris (strain ATCC 33913 / DSM 3586 / NCPPB 528 / LMG 568 / P 25), this protein is ATP-dependent dethiobiotin synthetase BioD.